The sequence spans 133 residues: Acyl-CoA thioester hydrolase YciA (133 aa).

One can recognise a HotDog ACOT-type domain in the interval Pro-8–Asp-123.

This sequence belongs to the acyl coenzyme A hydrolase family.

Its function is as follows. Catalyzes the hydrolysis of the thioester bond in palmitoyl-CoA and malonyl-CoA. The chain is Acyl-CoA thioester hydrolase YciA (yciA) from Salmonella typhi.